We begin with the raw amino-acid sequence, 645 residues long: 1-deoxy-D-xylulose-5-phosphate synthase (645 aa).

Thiamine diphosphate is bound by residues H79 and 120–122 (AHS). D155 serves as a coordination point for Mg(2+). Residues 156–157 (GA), N184, Y293, and E375 each bind thiamine diphosphate. Mg(2+) is bound at residue N184.

It belongs to the transketolase family. DXPS subfamily. Homodimer. Mg(2+) is required as a cofactor. It depends on thiamine diphosphate as a cofactor.

The catalysed reaction is D-glyceraldehyde 3-phosphate + pyruvate + H(+) = 1-deoxy-D-xylulose 5-phosphate + CO2. The protein operates within metabolic intermediate biosynthesis; 1-deoxy-D-xylulose 5-phosphate biosynthesis; 1-deoxy-D-xylulose 5-phosphate from D-glyceraldehyde 3-phosphate and pyruvate: step 1/1. Catalyzes the acyloin condensation reaction between C atoms 2 and 3 of pyruvate and glyceraldehyde 3-phosphate to yield 1-deoxy-D-xylulose-5-phosphate (DXP). This Ruegeria sp. (strain TM1040) (Silicibacter sp.) protein is 1-deoxy-D-xylulose-5-phosphate synthase.